An 86-amino-acid polypeptide reads, in one-letter code: Myosin light chain alkali (86 aa).

The region spanning 11-46 is the EF-hand domain; the sequence is GCYEDFIECLKLYDKEENGTMMLAELQHALLALGES.

Myosin is a hexamer of 2 heavy chains and 4 light chains.

The sequence is that of Myosin light chain alkali (Mlc1) from Drosophila subobscura (Fruit fly).